Here is a 439-residue protein sequence, read N- to C-terminus: C4-dicarboxylate transport protein 1 (439 aa).

The next 6 helical transmembrane spans lie at 18–38 (VLYI…WLWP), 56–76 (LIKM…IAHV), 91–111 (IYFE…ANVI), 157–177 (GEIL…MSLG), 193–213 (AIFG…FGAM), and 231–251 (LIAT…GIIA).

Belongs to the dicarboxylate/amino acid:cation symporter (DAACS) (TC 2.A.23) family.

The protein resides in the cell inner membrane. Responsible for the transport of dicarboxylates such as succinate, fumarate, and malate from the periplasm across the membrane. This Bradyrhizobium sp. (strain ORS 278) protein is C4-dicarboxylate transport protein 1.